The sequence spans 226 residues: Probable chemoreceptor glutamine deamidase CheD (226 aa).

It belongs to the CheD family.

It carries out the reaction L-glutaminyl-[protein] + H2O = L-glutamyl-[protein] + NH4(+). Functionally, probably deamidates glutamine residues to glutamate on methyl-accepting chemotaxis receptors (MCPs), playing an important role in chemotaxis. This Bordetella avium (strain 197N) protein is Probable chemoreceptor glutamine deamidase CheD.